Here is a 593-residue protein sequence, read N- to C-terminus: NADH-quinone oxidoreductase subunit C/D (593 aa).

Positions 1-184 are NADH dehydrogenase I subunit C; the sequence is MTADSALYIP…DPYSLSAAKQ (184 aa). The NADH dehydrogenase I subunit D stretch occupies residues 208-593; that stretch reads DYMFLNLGPN…IDFVMADVDR (386 aa).

This sequence in the N-terminal section; belongs to the complex I 30 kDa subunit family. It in the C-terminal section; belongs to the complex I 49 kDa subunit family. NDH-1 is composed of 13 different subunits. Subunits NuoB, CD, E, F, and G constitute the peripheral sector of the complex.

The protein localises to the cell inner membrane. The enzyme catalyses a quinone + NADH + 5 H(+)(in) = a quinol + NAD(+) + 4 H(+)(out). Its function is as follows. NDH-1 shuttles electrons from NADH, via FMN and iron-sulfur (Fe-S) centers, to quinones in the respiratory chain. The immediate electron acceptor for the enzyme in this species is believed to be ubiquinone. Couples the redox reaction to proton translocation (for every two electrons transferred, four hydrogen ions are translocated across the cytoplasmic membrane), and thus conserves the redox energy in a proton gradient. The protein is NADH-quinone oxidoreductase subunit C/D of Pseudomonas aeruginosa (strain UCBPP-PA14).